Here is a 556-residue protein sequence, read N- to C-terminus: MSVSAFNRRWAAVILEALTRHGVRHVCIAPGSRSTPLTLAAAENPAFIHHTHFDERGLGHLALGLAKVSQQPVAVIVTSGTAVANLYPALIEAGLTGEKLILLTADRPPELIDCGANQAIRQAGMFASHPSQTLSLPRPTQDIPARWLVSTIDNALAMLHAGALHINCPFAEPLYGDMNDTGLVWQQRLGDWWQDEKPWLREARRLASDKQRDWFFWRQKRGVVVAGRMSAEEGKKVAQWAQTLGWPLIGDVLSQTGQPLPCADLWLGNAKAVTELQQAQIVVQLGSSLTGKRLLQWQATCEPEEYWVIDNIEGRLDPAHHRGRRLVAKIADWLEMHPAEKRKPWCVEIPRLAELAWQRVVAQRDTFGEAQLAHRIRDYLPEQGQLFVGNSLVVRLIDALSQLPAGYPVYSNRGASGIDGLLSTAAGVQRASAKSTLAIVGDLSALYDLNALALLRQVSAPFVLIVVNNNGGQIFSLLPTPQSKRERFYLMPQNVHFDHAAAMFNLRYHRPENWEELESALAGAWRTPATTVIELVVNDTDGAQTLQQLLAQVSHL.

This sequence belongs to the TPP enzyme family. MenD subfamily. As to quaternary structure, homodimer. Mg(2+) is required as a cofactor. It depends on Mn(2+) as a cofactor. Thiamine diphosphate serves as cofactor.

The catalysed reaction is isochorismate + 2-oxoglutarate + H(+) = 5-enolpyruvoyl-6-hydroxy-2-succinyl-cyclohex-3-ene-1-carboxylate + CO2. The protein operates within quinol/quinone metabolism; 1,4-dihydroxy-2-naphthoate biosynthesis; 1,4-dihydroxy-2-naphthoate from chorismate: step 2/7. It participates in quinol/quinone metabolism; menaquinone biosynthesis. In terms of biological role, catalyzes the thiamine diphosphate-dependent decarboxylation of 2-oxoglutarate and the subsequent addition of the resulting succinic semialdehyde-thiamine pyrophosphate anion to isochorismate to yield 2-succinyl-5-enolpyruvyl-6-hydroxy-3-cyclohexene-1-carboxylate (SEPHCHC). In Salmonella dublin (strain CT_02021853), this protein is 2-succinyl-5-enolpyruvyl-6-hydroxy-3-cyclohexene-1-carboxylate synthase.